A 129-amino-acid polypeptide reads, in one-letter code: UPF0102 protein Ctha_1382 (129 aa).

This sequence belongs to the UPF0102 family.

The polypeptide is UPF0102 protein Ctha_1382 (Chloroherpeton thalassium (strain ATCC 35110 / GB-78)).